A 336-amino-acid polypeptide reads, in one-letter code: Casein kinase I isoform beta (336 aa).

The Protein kinase domain occupies 17 to 285; that stretch reads YKLVREIGFG…YLRQLFRLLF (269 aa). ATP is bound by residues 23–31 and Lys-46; that span reads IGFGSFGHV. Asp-136 functions as the Proton acceptor in the catalytic mechanism. Positions 309–320 are enriched in low complexity; sequence ASSSSGEGQQAQ. The interval 309-336 is disordered; sequence ASSSSGEGQQAQTPTGKSDNTKSEMKHS. Residues 327–336 are compositionally biased toward basic and acidic residues; the sequence is DNTKSEMKHS.

Belongs to the protein kinase superfamily. CK1 Ser/Thr protein kinase family. Casein kinase I subfamily. In terms of assembly, monomer.

It is found in the cytoplasm. It carries out the reaction L-seryl-[protein] + ATP = O-phospho-L-seryl-[protein] + ADP + H(+). The enzyme catalyses L-threonyl-[protein] + ATP = O-phospho-L-threonyl-[protein] + ADP + H(+). Functionally, casein kinases are operationally defined by their preferential utilization of acidic proteins such as caseins as substrates. It can phosphorylate a large number of proteins. Participates in Wnt signaling. In Bos taurus (Bovine), this protein is Casein kinase I isoform beta (CSNK1B).